The sequence spans 157 residues: MKEIVLAGGCFWGVEEYMSRIEGIVETKVGYANGIKENPSYEEVCSGVTGHAEACYIKYDESIISLEELLNKFWSIIDPTVLNKQGNDRGTQYRTCIFYLDEKDLNVIIKSKYQEQKNYRKPIVTEVEPLKCFYEAEEYHQKYLKKNPGGYCHIHLD.

Cysteine 10 is a catalytic residue.

Belongs to the MsrA Met sulfoxide reductase family.

It catalyses the reaction L-methionyl-[protein] + [thioredoxin]-disulfide + H2O = L-methionyl-(S)-S-oxide-[protein] + [thioredoxin]-dithiol. The catalysed reaction is [thioredoxin]-disulfide + L-methionine + H2O = L-methionine (S)-S-oxide + [thioredoxin]-dithiol. Its function is as follows. Has an important function as a repair enzyme for proteins that have been inactivated by oxidation. Catalyzes the reversible oxidation-reduction of methionine sulfoxide in proteins to methionine. The sequence is that of Peptide methionine sulfoxide reductase MsrA from Clostridium botulinum (strain Kyoto / Type A2).